Reading from the N-terminus, the 194-residue chain is Phosphoheptose isomerase (194 aa).

Positions 34–188 (LANIFTKGKK…IEGVERIMFP (155 aa)) constitute an SIS domain. 49–51 (NGG) is a binding site for substrate. Zn(2+) contacts are provided by H58 and E62. Substrate is bound by residues E62, 90–91 (ND), 116–118 (STS), S121, and Q168. Residues Q168 and H176 each coordinate Zn(2+).

It belongs to the SIS family. GmhA subfamily. It depends on Zn(2+) as a cofactor.

Its subcellular location is the cytoplasm. The catalysed reaction is 2 D-sedoheptulose 7-phosphate = D-glycero-alpha-D-manno-heptose 7-phosphate + D-glycero-beta-D-manno-heptose 7-phosphate. The protein operates within carbohydrate biosynthesis; D-glycero-D-manno-heptose 7-phosphate biosynthesis; D-glycero-alpha-D-manno-heptose 7-phosphate and D-glycero-beta-D-manno-heptose 7-phosphate from sedoheptulose 7-phosphate: step 1/1. In terms of biological role, catalyzes the isomerization of sedoheptulose 7-phosphate in D-glycero-D-manno-heptose 7-phosphate. This is Phosphoheptose isomerase from Fusobacterium nucleatum subsp. nucleatum (strain ATCC 25586 / DSM 15643 / BCRC 10681 / CIP 101130 / JCM 8532 / KCTC 2640 / LMG 13131 / VPI 4355).